Reading from the N-terminus, the 134-residue chain is Small ribosomal subunit protein uS11 (134 aa).

The tract at residues 1–24 is disordered; sequence MATKMAGVKRAGRKRKERKNIERG.

Belongs to the universal ribosomal protein uS11 family. As to quaternary structure, part of the 30S ribosomal subunit. Interacts with proteins S7 and S18. Binds to IF-3.

Functionally, located on the platform of the 30S subunit, it bridges several disparate RNA helices of the 16S rRNA. Forms part of the Shine-Dalgarno cleft in the 70S ribosome. This is Small ribosomal subunit protein uS11 from Acetivibrio thermocellus (strain ATCC 27405 / DSM 1237 / JCM 9322 / NBRC 103400 / NCIMB 10682 / NRRL B-4536 / VPI 7372) (Clostridium thermocellum).